Reading from the N-terminus, the 256-residue chain is Hydroxyacylglutathione hydrolase (256 aa).

Residues histidine 55, histidine 57, aspartate 59, histidine 60, histidine 113, aspartate 130, and histidine 168 each contribute to the Zn(2+) site.

The protein belongs to the metallo-beta-lactamase superfamily. Glyoxalase II family. As to quaternary structure, monomer. The cofactor is Zn(2+).

The enzyme catalyses an S-(2-hydroxyacyl)glutathione + H2O = a 2-hydroxy carboxylate + glutathione + H(+). The protein operates within secondary metabolite metabolism; methylglyoxal degradation; (R)-lactate from methylglyoxal: step 2/2. Functionally, thiolesterase that catalyzes the hydrolysis of S-D-lactoyl-glutathione to form glutathione and D-lactic acid. This is Hydroxyacylglutathione hydrolase from Psychromonas ingrahamii (strain DSM 17664 / CCUG 51855 / 37).